Reading from the N-terminus, the 88-residue chain is Putative membrane protein insertion efficiency factor (88 aa).

A disordered region spans residues 68 to 88 (VPPKKDKNADSEHSCKVHHHH). Residues 69–82 (PPKKDKNADSEHSC) show a composition bias toward basic and acidic residues.

The protein belongs to the UPF0161 family.

It is found in the cell membrane. Its function is as follows. Could be involved in insertion of integral membrane proteins into the membrane. In Listeria monocytogenes serovar 1/2a (strain ATCC BAA-679 / EGD-e), this protein is Putative membrane protein insertion efficiency factor.